An 85-amino-acid chain; its full sequence is Large ribosomal subunit protein bL31B (85 aa).

Belongs to the bacterial ribosomal protein bL31 family. Type B subfamily. As to quaternary structure, part of the 50S ribosomal subunit.

In Staphylococcus epidermidis (strain ATCC 35984 / DSM 28319 / BCRC 17069 / CCUG 31568 / BM 3577 / RP62A), this protein is Large ribosomal subunit protein bL31B.